A 642-amino-acid polypeptide reads, in one-letter code: Poly(A) RNA polymerase protein 1 (642 aa).

2 disordered regions span residues 1–29 (MTRL…KSSF) and 84–104 (TSSE…LEDN). Positions 88–100 (DEQRAESSKRNNS) are enriched in basic and acidic residues. Residues Asp233 and Asp235 each coordinate Mg(2+). ATP contacts are provided by Gly298, Lys323, Asn428, and Arg432. The region spanning 368-428 (NLGVLLIDFF…AIQDPGDPNN (61 aa)) is the PAP-associated domain. The disordered stretch occupies residues 535–642 (AKKKQKAKKD…DYWLSKGQAL (108 aa)). Positions 578 to 588 (QGSLLHQNNLS) are enriched in polar residues. Phosphoserine occurs at positions 596 and 602. Positions 604–635 (QDQKGRDTPSGQDEKSPLETKTVDAQTRRDYW) are enriched in basic and acidic residues.

This sequence belongs to the DNA polymerase type-B-like family. In terms of assembly, component of the TRAMP5 complex composed of at least AIR1, MTR4 and TFR5. Interacts with POL2, DPB2 and DPB11. The cofactor is Mg(2+). Mn(2+) is required as a cofactor.

Its subcellular location is the nucleus. The protein resides in the nucleolus. It carries out the reaction RNA(n) + ATP = RNA(n)-3'-adenine ribonucleotide + diphosphate. Catalytic subunit of the TRAMP5 complex which has a poly(A) RNA polymerase activity and is involved in a post-transcriptional quality control mechanism limiting inappropriate expression of genetic information. Polyadenylation is required for the degradative activity of the exosome on several of its nuclear RNA substrates like cryptic transcripts generated by RNA polymerase II and III, or hypomethylated pre-tRNAi-Met. Polyadenylates RNA processing and degradation intermediates of snRNAs, snoRNAs and mRNAs that accumulate in strains lacking a functional exosome. TRF5 is also required for proper nuclear division in mitosis and sister chromatid cohesion. Involved in the regulation of histone mRNA levels. May mediate mitotic chromosome condensation. This is Poly(A) RNA polymerase protein 1 (TRF5) from Saccharomyces cerevisiae (strain ATCC 204508 / S288c) (Baker's yeast).